The following is a 122-amino-acid chain: Large ribosomal subunit protein uL14 (122 aa).

The protein belongs to the universal ribosomal protein uL14 family. Part of the 50S ribosomal subunit. Forms a cluster with proteins L3 and L19. In the 70S ribosome, L14 and L19 interact and together make contacts with the 16S rRNA in bridges B5 and B8.

Binds to 23S rRNA. Forms part of two intersubunit bridges in the 70S ribosome. The polypeptide is Large ribosomal subunit protein uL14 (Bacillus anthracis (strain A0248)).